Consider the following 426-residue polypeptide: Enolase (426 aa).

Glutamine 162 serves as a coordination point for (2R)-2-phosphoglycerate. The active-site Proton donor is glutamate 204. The Mg(2+) site is built by aspartate 241, glutamate 286, and aspartate 313. Residues lysine 338, arginine 367, serine 368, and lysine 389 each contribute to the (2R)-2-phosphoglycerate site. Lysine 338 functions as the Proton acceptor in the catalytic mechanism.

This sequence belongs to the enolase family. Mg(2+) is required as a cofactor.

It is found in the cytoplasm. It localises to the secreted. The protein resides in the cell surface. It catalyses the reaction (2R)-2-phosphoglycerate = phosphoenolpyruvate + H2O. It participates in carbohydrate degradation; glycolysis; pyruvate from D-glyceraldehyde 3-phosphate: step 4/5. Functionally, catalyzes the reversible conversion of 2-phosphoglycerate (2-PG) into phosphoenolpyruvate (PEP). It is essential for the degradation of carbohydrates via glycolysis. The polypeptide is Enolase (Aliarcobacter butzleri (strain RM4018) (Arcobacter butzleri)).